We begin with the raw amino-acid sequence, 711 residues long: MSLSTGSTGSERSNQSLIKGALDLDPWLEPFSGQLIHRQLNLRKWYDEFKQNEGSLTNFASAYEKYGLHANWDTKEVFINEYIPNVVEVSLVGDFNNWDTNTHKLKPVNDFGLWSLTIKPTENNEFAVPHDSRYKISMVTASGERIYRLCPWLKRATPSTENNLYEGRFWNPQPTETYKFKHERPRLESKDGIKIYEAHVGISTPEPKVGSYKNFTTKVLPVIHKLGYNTIQLMAVMEHAYYASFGYQVTNFFAISSRFGTPEDLKELIDEAHRLGIRVLLDVVHSHSSKNVEDGLNMFNGTDHYLFHGGTKGSHELWDSRLFNYSNYETLRFLLSNLRFYIDVFKFDGFRFDGVTSMLYKHHGLSFGFSGDYNEYFNSEWVDNDAITYLMLGHKLLDEISVRENNYKFVSIAEDVSGMPTLCLPIGQGGIGFDYRLSMAIPDMWIKIIKHLSDEEWDMGSLVHTLTNRRHGERCISYCESHDQALVGDKTIAFWLMDKEMYTNMSTLTPFTPVIDRGIALHKMIRLITFSLGGEGYLNFEGNEFGHPEWLDFPRKGNGESYAYARRQFNLIEDDLLRYKFLFAFDGAMQHLDTKYGILLSSQAYVSLKNENDKVIVFERNGLLFIFNFHPTNSYADYKIGVETPGVYQIVLNSDSLSFGGHGRIEETNKETGEKLQFFTNNERWNDRSNALFCYIPSRTAIVLQVKEKVV.

(1,4-alpha-D-glucosyl)n is bound by residues tryptophan 98 and lysine 135. The Nucleophile role is filled by aspartate 353. Glutamate 414 (proton donor) is an active-site residue.

The protein belongs to the glycosyl hydrolase 13 family. GlgB subfamily.

The protein localises to the cytoplasm. It catalyses the reaction Transfers a segment of a (1-&gt;4)-alpha-D-glucan chain to a primary hydroxy group in a similar glucan chain.. It participates in glycan biosynthesis; glycogen biosynthesis. In terms of biological role, glycogen-branching enzyme participates in the glycogen biosynthetic process along with glycogenin and glycogen synthase. Generates alpha-1,6-glucosidic branches from alpha-1,4-linked glucose chains, to increase solubility of the glycogen polymer. This is 1,4-alpha-glucan-branching enzyme (GLC3) from Debaryomyces hansenii (strain ATCC 36239 / CBS 767 / BCRC 21394 / JCM 1990 / NBRC 0083 / IGC 2968) (Yeast).